The primary structure comprises 526 residues: GMP synthase [glutamine-hydrolyzing] (526 aa).

Positions 10-208 (RILILDFGSQ…VVDLCGCEKL (199 aa)) constitute a Glutamine amidotransferase type-1 domain. Catalysis depends on cysteine 87, which acts as the Nucleophile. Residues histidine 182 and glutamate 184 contribute to the active site. The 193-residue stretch at 209–401 (WTTENIIDDS…LGLPSDMVYR (193 aa)) folds into the GMPS ATP-PPase domain. 236–242 (SGGVDSS) contacts ATP.

In terms of assembly, homodimer.

It carries out the reaction XMP + L-glutamine + ATP + H2O = GMP + L-glutamate + AMP + diphosphate + 2 H(+). Its pathway is purine metabolism; GMP biosynthesis; GMP from XMP (L-Gln route): step 1/1. Functionally, catalyzes the synthesis of GMP from XMP. This chain is GMP synthase [glutamine-hydrolyzing], found in Hydrogenovibrio crunogenus (strain DSM 25203 / XCL-2) (Thiomicrospira crunogena).